The following is a 749-amino-acid chain: Patatin-like phospholipase domain-containing protein An01g04180 (749 aa).

The interval 1-21 (MNGAEKSAAGDTYDPSTIPDY) is disordered. Residues 87–107 (WPFLFTVFGWITALAFAYTLT) form a helical membrane-spanning segment. A PNPLA domain is found at 277–468 (LCLSGGATFA…RTDIPIKALN (192 aa)). Residues 308 to 312 (GTSGG) carry the GXSXG motif. Ser-310 functions as the Nucleophile in the catalytic mechanism. Asp-455 functions as the Proton acceptor in the catalytic mechanism. A disordered region spans residues 619–726 (AGGRPISPAP…STGSSIFEEV (108 aa)). Residues 649–664 (PLNERLDHNLPERRGD) are compositionally biased toward basic and acidic residues. Low complexity predominate over residues 685–707 (SLSENSSNESAARPSSSSSSSRL).

It belongs to the PLPL family.

The protein resides in the membrane. Its function is as follows. Probable lipid hydrolase. In Aspergillus niger (strain ATCC MYA-4892 / CBS 513.88 / FGSC A1513), this protein is Patatin-like phospholipase domain-containing protein An01g04180.